We begin with the raw amino-acid sequence, 351 residues long: Cyclic AMP-dependent transcription factor ATF-4 (351 aa).

A Glycyl lysine isopeptide (Lys-Gly) (interchain with G-Cter in SUMO2) cross-link involves residue lysine 53. Positions 210 to 268 (EEDTPSDNDSGICMSPESYLGSPQHSPSTRGSPNRSLPSPGVLCGSARPKPYDPPGEKM) are disordered. Phosphothreonine is present on threonine 213. At serine 215 the chain carries Phosphoserine; by CK2. Residues 215-224 (SDNDSGICMS) carry the BetaTrCP degron motif motif. Serine 219, serine 224, serine 231, and serine 235 each carry phosphoserine. Positions 230-246 (GSPQHSPSTRGSPNRSL) are enriched in polar residues. Position 236 is a 4-hydroxyproline (proline 236). A Phosphoserine; by RPS6KA3 modification is found at serine 245. Serine 248 is modified (phosphoserine). Residues lysine 259, lysine 267, and lysine 272 each participate in a glycyl lysine isopeptide (Lys-Gly) (interchain with G-Cter in SUMO2) cross-link. Residues 278-341 (LDKKLKKMEQ…QYLKDLIEEV (64 aa)) form the bZIP domain. Positions 280-300 (KKLKKMEQNKTAATRYRQKKR) are basic motif. A coiled-coil region spans residues 280-340 (KKLKKMEQNK…IQYLKDLIEE (61 aa)). The segment at 305–341 (ALTGECKELEKKNEALKERADSLAKEIQYLKDLIEEV) is interaction with GABBR1. Residues 306–334 (LTGECKELEKKNEALKERADSLAKEIQYL) are leucine-zipper. Lysine 311 is subject to N6-acetyllysine.

This sequence belongs to the bZIP family. Binds DNA as a homodimer and as a heterodimer. Heterodimer; heterodimerizes with CEBPB. Heterodimer; heterodimerizes with DDIT3/CHOP. Interacts with CEP290 (via an N-terminal region). Interacts with NEK6, DAPK2 (isoform 2) and ZIPK/DAPK3. Interacts (via its leucine zipper domain) with GABBR1 and GABBR2 (via their C-termini). Forms a heterodimer with TXLNG in osteoblasts. Interacts (via its DNA binding domain) with FOXO1 (C-terminal half); the interaction occurs in osteoblasts and regulates glucose homeostasis through suppression of beta-cell proliferation and a decrease in insulin production. Interacts with SATB2; the interaction results in enhanced DNA binding and transactivation by these transcription factors. Interacts with ABRAXAS2. Interacts with TRIB3, inhibiting the transactivation activity of ATF4. Interacts with DISC1; which inhibits ATF4 transcription factor activity by disrupting ATF4 dimerization and DNA-binding. Interacts with EP300/p300; EP300/p300 stabilizes ATF4 and increases its transcriptional activity independently of its catalytic activity by preventing its ubiquitination. Post-translationally, ubiquitinated by SCF(BTRC) in response to mTORC1 signal, followed by proteasomal degradation and leading to down-regulate expression of SIRT4. Interaction with EP300/p300 inhibits ubiquitination by SCF(BTRC). Phosphorylation at Ser-245 by RPS6KA3/RSK2 in osteoblasts enhances transactivation activity and promotes osteoblast differentiation. Phosphorylated on the betaTrCP degron motif at Ser-219, followed by phosphorylation at Thr-213, Ser-224, Ser-231, Ser-235 and Ser-248, promoting interaction with BTRC and ubiquitination. Phosphorylation is promoted by mTORC1. Phosphorylation at Ser-215 by CK2 decreases its stability. Phosphorylated by NEK6. In terms of processing, hydroxylated by PHD3, leading to decreased protein stability.

The protein resides in the nucleus. Its subcellular location is the nucleus speckle. It localises to the cytoplasm. It is found in the cell membrane. The protein localises to the cytoskeleton. The protein resides in the microtubule organizing center. Its subcellular location is the centrosome. In terms of biological role, transcription factor that binds the cAMP response element (CRE) (consensus: 5'-GTGACGT[AC][AG]-3') and displays two biological functions, as regulator of metabolic and redox processes under normal cellular conditions, and as master transcription factor during integrated stress response (ISR). Binds to asymmetric CRE's as a heterodimer and to palindromic CRE's as a homodimer. Core effector of the ISR, which is required for adaptation to various stress such as endoplasmic reticulum (ER) stress, amino acid starvation, mitochondrial stress or oxidative stress. During ISR, ATF4 translation is induced via an alternative ribosome translation re-initiation mechanism in response to EIF2S1/eIF-2-alpha phosphorylation, and stress-induced ATF4 acts as a master transcription factor of stress-responsive genes in order to promote cell recovery. Promotes the transcription of genes linked to amino acid sufficiency and resistance to oxidative stress to protect cells against metabolic consequences of ER oxidation. Activates the transcription of NLRP1, possibly in concert with other factors in response to ER stress. Activates the transcription of asparagine synthetase (ASNS) in response to amino acid deprivation or ER stress. However, when associated with DDIT3/CHOP, the transcriptional activation of the ASNS gene is inhibited in response to amino acid deprivation. Together with DDIT3/CHOP, mediates programmed cell death by promoting the expression of genes involved in cellular amino acid metabolic processes, mRNA translation and the terminal unfolded protein response (terminal UPR), a cellular response that elicits programmed cell death when ER stress is prolonged and unresolved. Activates the expression of COX7A2L/SCAF1 downstream of the EIF2AK3/PERK-mediated unfolded protein response, thereby promoting formation of respiratory chain supercomplexes and increasing mitochondrial oxidative phosphorylation. Together with DDIT3/CHOP, activates the transcription of the IRS-regulator TRIB3 and promotes ER stress-induced neuronal cell death by regulating the expression of BBC3/PUMA in response to ER stress. May cooperate with the UPR transcriptional regulator QRICH1 to regulate ER protein homeostasis which is critical for cell viability in response to ER stress. In the absence of stress, ATF4 translation is at low levels and it is required for normal metabolic processes such as embryonic lens formation, fetal liver hematopoiesis, bone development and synaptic plasticity. Acts as a regulator of osteoblast differentiation in response to phosphorylation by RPS6KA3/RSK2: phosphorylation in osteoblasts enhances transactivation activity and promotes expression of osteoblast-specific genes and post-transcriptionally regulates the synthesis of Type I collagen, the main constituent of the bone matrix. Cooperates with FOXO1 in osteoblasts to regulate glucose homeostasis through suppression of beta-cell production and decrease in insulin production. Activates transcription of SIRT4. Regulates the circadian expression of the core clock component PER2 and the serotonin transporter SLC6A4. Binds in a circadian time-dependent manner to the cAMP response elements (CRE) in the SLC6A4 and PER2 promoters and periodically activates the transcription of these genes. Mainly acts as a transcriptional activator in cellular stress adaptation, but it can also act as a transcriptional repressor: acts as a regulator of synaptic plasticity by repressing transcription, thereby inhibiting induction and maintenance of long-term memory. Regulates synaptic functions via interaction with DISC1 in neurons, which inhibits ATF4 transcription factor activity by disrupting ATF4 dimerization and DNA-binding. Its function is as follows. (Microbial infection) Binds to a Tax-responsive enhancer element in the long terminal repeat of HTLV-I. The chain is Cyclic AMP-dependent transcription factor ATF-4 from Homo sapiens (Human).